The chain runs to 85 residues: Alpha-defensin 14 (85 aa).

The N-terminal stretch at 1–11 (ALVLLAFQVQA) is a signal peptide. Positions 12-50 (DPIQNTDEETKTEEQPGEDDQAVSVSFGDPEGSSLQEES) are excised as a propeptide. The disordered stretch occupies residues 13-48 (PIQNTDEETKTEEQPGEDDQAVSVSFGDPEGSSLQE). 3 cysteine pairs are disulfide-bonded: C56–C84, C58–C73, and C63–C83.

The protein belongs to the alpha-defensin family. As to expression, paneth cells of the small bowel.

Its subcellular location is the secreted. Its function is as follows. Probably contributes to the antimicrobial barrier function of the small bowel mucosa. This is Alpha-defensin 14 (Defa14) from Mus musculus (Mouse).